The chain runs to 427 residues: Tol-Pal system protein TolB (427 aa).

The signal sequence occupies residues 1–23 (MKLLKRLVSVFAIVLAVGSNAFA).

It belongs to the TolB family. As to quaternary structure, the Tol-Pal system is composed of five core proteins: the inner membrane proteins TolA, TolQ and TolR, the periplasmic protein TolB and the outer membrane protein Pal. They form a network linking the inner and outer membranes and the peptidoglycan layer.

The protein localises to the periplasm. In terms of biological role, part of the Tol-Pal system, which plays a role in outer membrane invagination during cell division and is important for maintaining outer membrane integrity. This Haemophilus influenzae (strain PittEE) protein is Tol-Pal system protein TolB.